Here is a 269-residue protein sequence, read N- to C-terminus: Eukaryotic translation initiation factor 3 subunit G-1 (269 aa).

The RRM domain occupies 188 to 266 (AAIRISNLSE…LILSVEWSKP (79 aa)).

The protein belongs to the eIF-3 subunit G family. In terms of assembly, component of the eukaryotic translation initiation factor 3 (eIF-3) complex. The eIF-3 complex interacts with pix.

The protein resides in the cytoplasm. Its function is as follows. RNA-binding component of the eukaryotic translation initiation factor 3 (eIF-3) complex, which is involved in protein synthesis of a specialized repertoire of mRNAs and, together with other initiation factors, stimulates binding of mRNA and methionyl-tRNAi to the 40S ribosome. The eIF-3 complex specifically targets and initiates translation of a subset of mRNAs involved in cell proliferation. This subunit can bind 18S rRNA. The protein is Eukaryotic translation initiation factor 3 subunit G-1 of Drosophila erecta (Fruit fly).